Reading from the N-terminus, the 199-residue chain is MKFSPLVDELIQSLRCLPGVGPKSAQRMAFQLLERDRKAGAKLADSLAKAMSDVGHCQSCRTFTEETYCPICVSTKRGHSDIICVVETPADVLAIEAGGHFSGRYFVLLGHLSPLDGVGPEELGLALLEQHLASGDVSELILATNPTVEGDATAHYIADMAKRHELMVSRIAHGVPVGGELEYVDSTTLALSFNGRLPI.

A C4-type zinc finger spans residues 57-72 (CQSCRTFTEETYCPIC). The region spanning 81–176 (DIICVVETPA…MVSRIAHGVP (96 aa)) is the Toprim domain.

Belongs to the RecR family.

Functionally, may play a role in DNA repair. It seems to be involved in an RecBC-independent recombinational process of DNA repair. It may act with RecF and RecO. This is Recombination protein RecR from Shewanella halifaxensis (strain HAW-EB4).